Consider the following 330-residue polypeptide: DNA repair and recombination protein RadA (330 aa).

124 to 131 (GEFGSGKT) is an ATP binding site.

It belongs to the eukaryotic RecA-like protein family.

In terms of biological role, involved in DNA repair and in homologous recombination. Binds and assemble on single-stranded DNA to form a nucleoprotein filament. Hydrolyzes ATP in a ssDNA-dependent manner and promotes DNA strand exchange between homologous DNA molecules. The sequence is that of DNA repair and recombination protein RadA from Pyrobaculum neutrophilum (strain DSM 2338 / JCM 9278 / NBRC 100436 / V24Sta) (Thermoproteus neutrophilus).